The primary structure comprises 446 residues: Hercynine oxygenase (446 aa).

His51 contacts Fe cation. 87 to 90 contacts gamma-L-glutamyl-L-cysteine; the sequence is RASR. His134 and His138 together coordinate Fe cation. Gamma-L-glutamyl-L-cysteine contacts are provided by Asp416 and Arg420.

The protein belongs to the EgtB family. In terms of assembly, monomer. Requires Fe(2+) as cofactor.

The enzyme catalyses gamma-L-glutamyl-L-cysteine + hercynine + O2 = gamma-L-glutamyl-hercynylcysteine S-oxide + H2O. Its pathway is amino-acid biosynthesis; ergothioneine biosynthesis. Functionally, catalyzes the oxidative sulfurization of hercynine (N-alpha,N-alpha,N-alpha-trimethyl-L-histidine) into hercynyl-gamma-L-glutamyl-L-cysteine sulfoxide, a step in the biosynthesis pathway of ergothioneine. This is Hercynine oxygenase from Mycolicibacterium thermoresistibile (strain ATCC 19527 / DSM 44167 / CIP 105390 / JCM 6362 / NCTC 10409 / 316) (Mycobacterium thermoresistibile).